The following is a 448-amino-acid chain: Fibulin-5 (448 aa).

Positions 1–23 (MPGLKRILTVTILALWLPHPGNA) are cleaved as a signal peptide. An EGF-like 1; calcium-binding domain is found at 42–82 (DIDECRTIPEACRGDMMCVNQNGGYLCIPRTNPVYRGPYSN). Cystine bridges form between C46-C59, C53-C68, C131-C144, C138-C153, C155-C166, C172-C181, C177-C190, C192-C205, C211-C221, C217-C230, C232-C245, C251-C262, C258-C271, C273-C286, C292-C305, C299-C314, and C320-C332. A Cell attachment site motif is present at residues 54–56 (RGD). In terms of domain architecture, EGF-like 2; calcium-binding spans 127–167 (DVDECATDSHQCNPTQICINTEGGYTCSCTDGYWLLEGQCL). The region spanning 168 to 206 (DIDECRYGYCQQLCANVPGSYSCTCNPGFTLNDDGRSCQ) is the EGF-like 3; calcium-binding domain. The EGF-like 4; calcium-binding domain maps to 207–246 (DVNECETENPCVQTCVNTYGSFICRCDPGYELEEDGIHCS). Residues 245–448 (CSDMDECSFS…LRIYVSQYPF (204 aa)) are interaction with LOXL1. An EGF-like 5; calcium-binding domain is found at 247-287 (DMDECSFSEFLCQHECVNQPGSYFCSCPPGYVLLDDNRSCQ). Residues N283 and N296 are each glycosylated (N-linked (GlcNAc...) asparagine). One can recognise an EGF-like 6; calcium-binding domain in the interval 288–333 (DINECEHRNHTCTSLQTCYNLQGGFKCIDPISCEEPYLLIGENRCM).

It belongs to the fibulin family. As to quaternary structure, homodimer. Monomer, homodimerizes in presence of Ca(2+). Interacts with ELN. Interacts (via N-terminus) with the integrins ITGAV/ITGB3, ITGAV/ITGB5 and ITGA9/ITGB1. Interacts with FBN1 (via N-terminal domain). Forms a ternary complex with ELN and FBN1. Interacts with EFEMP2 with moderate affinity. Interacts with LOXL1. In terms of processing, N-glycosylated.

The protein localises to the secreted. Its subcellular location is the extracellular space. It is found in the extracellular matrix. Essential for elastic fiber formation, is involved in the assembly of continuous elastin (ELN) polymer and promotes the interaction of microfibrils and ELN. Stabilizes and organizes elastic fibers in the skin, lung and vasculature. Promotes adhesion of endothelial cells through interaction of integrins and the RGD motif. Vascular ligand for integrin receptors which may play a role in vascular development and remodeling. May act as an adapter that mediates the interaction between FBN1 and ELN. In Mus musculus (Mouse), this protein is Fibulin-5 (Fbln5).